A 340-amino-acid chain; its full sequence is GTP 3',8-cyclase (340 aa).

In terms of domain architecture, Radical SAM core spans 8–229; that stretch reads KLGRPIRDLR…IEQHFEISPV (222 aa). R17 provides a ligand contact to GTP. C24 and C28 together coordinate [4Fe-4S] cluster. Y30 is a binding site for S-adenosyl-L-methionine. Position 31 (C31) interacts with [4Fe-4S] cluster. Residue R71 participates in GTP binding. G75 contributes to the S-adenosyl-L-methionine binding site. T102 is a GTP binding site. Position 126 (S126) interacts with S-adenosyl-L-methionine. A GTP-binding site is contributed by K163. M197 contacts S-adenosyl-L-methionine. [4Fe-4S] cluster is bound by residues C261 and C264. Position 266–268 (266–268) interacts with GTP; it reads RAR. C278 contributes to the [4Fe-4S] cluster binding site.

Belongs to the radical SAM superfamily. MoaA family. As to quaternary structure, monomer and homodimer. Requires [4Fe-4S] cluster as cofactor.

The enzyme catalyses GTP + AH2 + S-adenosyl-L-methionine = (8S)-3',8-cyclo-7,8-dihydroguanosine 5'-triphosphate + 5'-deoxyadenosine + L-methionine + A + H(+). The protein operates within cofactor biosynthesis; molybdopterin biosynthesis. In terms of biological role, catalyzes the cyclization of GTP to (8S)-3',8-cyclo-7,8-dihydroguanosine 5'-triphosphate. This is GTP 3',8-cyclase from Staphylococcus epidermidis (strain ATCC 35984 / DSM 28319 / BCRC 17069 / CCUG 31568 / BM 3577 / RP62A).